A 180-amino-acid polypeptide reads, in one-letter code: MTIQVQNLNCCPGRFVCVHKMTLLIILIISAAVTVIDQLYQKLPYDEQTKYIVSTITDGINATIISVMAILGLNNLNRVRYSKLDENGVYSQEMVTMNVQSDAANNKKQLKKKENEDVDEEKGLYPNLKLTEPTAPMIHNYMYDHKTQQAYLLTEHQIEQIKQNSVDPNNTPKIEVRSQF.

Helical transmembrane passes span 16–36 and 52–72; these read VCVHKMTLLIILIISAAVTVI and IVSTITDGINATIISVMAILG.

It localises to the host membrane. This Banna virus (BAV) protein is Non-structural protein 4 (Segment-11).